A 103-amino-acid polypeptide reads, in one-letter code: Cystatin-A1 (103 aa).

The short motif at 51 to 55 (QVVAG) is the Secondary area of contact element.

It belongs to the cystatin family.

It is found in the cytoplasm. In terms of biological role, this is an intracellular thiol proteinase inhibitor. The protein is Cystatin-A1 of Sus scrofa (Pig).